A 275-amino-acid chain; its full sequence is NH(3)-dependent NAD(+) synthetase (275 aa).

47-54 (GISGGQDS) is a binding site for ATP. Aspartate 53 contributes to the Mg(2+) binding site. Arginine 139 lines the deamido-NAD(+) pocket. Threonine 159 provides a ligand contact to ATP. Glutamate 164 contributes to the Mg(2+) binding site. Lysine 172 and aspartate 179 together coordinate deamido-NAD(+). 2 residues coordinate ATP: lysine 188 and threonine 210. 259–260 (HK) provides a ligand contact to deamido-NAD(+).

Belongs to the NAD synthetase family. In terms of assembly, homodimer.

The catalysed reaction is deamido-NAD(+) + NH4(+) + ATP = AMP + diphosphate + NAD(+) + H(+). It functions in the pathway cofactor biosynthesis; NAD(+) biosynthesis; NAD(+) from deamido-NAD(+) (ammonia route): step 1/1. Its function is as follows. Catalyzes the ATP-dependent amidation of deamido-NAD to form NAD. Uses ammonia as a nitrogen source. The polypeptide is NH(3)-dependent NAD(+) synthetase (Staphylococcus epidermidis (strain ATCC 35984 / DSM 28319 / BCRC 17069 / CCUG 31568 / BM 3577 / RP62A)).